The sequence spans 121 residues: Large ribosomal subunit protein uL18 (121 aa).

A compositionally biased stretch (basic residues) spans 1–22; it reads MIKKPDKKTLRQGKHKRVRRKV. The disordered stretch occupies residues 1-23; that stretch reads MIKKPDKKTLRQGKHKRVRRKVA.

This sequence belongs to the universal ribosomal protein uL18 family. As to quaternary structure, part of the 50S ribosomal subunit; part of the 5S rRNA/L5/L18/L25 subcomplex. Contacts the 5S and 23S rRNAs.

Functionally, this is one of the proteins that bind and probably mediate the attachment of the 5S RNA into the large ribosomal subunit, where it forms part of the central protuberance. The protein is Large ribosomal subunit protein uL18 of Syntrophomonas wolfei subsp. wolfei (strain DSM 2245B / Goettingen).